We begin with the raw amino-acid sequence, 121 residues long: Small ribosomal subunit protein uS13 (121 aa).

The segment at 98-121 (RGQKTRNNAHTVKGKPKSIAGKKK) is disordered. The span at 109-121 (VKGKPKSIAGKKK) shows a compositional bias: basic residues.

This sequence belongs to the universal ribosomal protein uS13 family. In terms of assembly, part of the 30S ribosomal subunit. Forms a loose heterodimer with protein S19. Forms two bridges to the 50S subunit in the 70S ribosome.

Functionally, located at the top of the head of the 30S subunit, it contacts several helices of the 16S rRNA. In the 70S ribosome it contacts the 23S rRNA (bridge B1a) and protein L5 of the 50S subunit (bridge B1b), connecting the 2 subunits; these bridges are implicated in subunit movement. Contacts the tRNAs in the A and P-sites. The chain is Small ribosomal subunit protein uS13 from Phytoplasma australiense.